Consider the following 229-residue polypeptide: Potassium/proton antiporter CemA (229 aa).

Transmembrane regions (helical) follow at residues 6–26, 107–127, and 189–209; these read AFIP…ISLC, ILHF…SFWG, and ILSG…KYWI.

Belongs to the CemA family.

It is found in the plastid. It localises to the chloroplast inner membrane. The catalysed reaction is K(+)(in) + H(+)(out) = K(+)(out) + H(+)(in). Functionally, contributes to K(+)/H(+) antiport activity by supporting proton efflux to control proton extrusion and homeostasis in chloroplasts in a light-dependent manner to modulate photosynthesis. Prevents excessive induction of non-photochemical quenching (NPQ) under continuous-light conditions. Indirectly promotes efficient inorganic carbon uptake into chloroplasts. This is Potassium/proton antiporter CemA from Barbarea verna (Land cress).